Consider the following 190-residue polypeptide: Peptidoglycan recognition protein 1 (190 aa).

Positions 1–21 are cleaved as a signal peptide; that stretch reads MSRRYTPLAWVLLALLGLGAA. A Pyrrolidone carboxylic acid modification is found at Q22. 3 cysteine pairs are disulfide-bonded: C24–C148, C40–C85, and C61–C67. In terms of domain architecture, N-acetylmuramoyl-L-alanine amidase spans 46–174; that stretch reads QPVRYVVVSH…RDVQQTLSPG (129 aa).

Belongs to the N-acetylmuramoyl-L-alanine amidase 2 family. Homodimer; disulfide-linked.

The protein resides in the secreted. It localises to the cytoplasmic granule. Functionally, innate immunity protein that plays several important functions in antimicrobial and antitumor defense systems. Acts as a pattern receptor that binds to murein peptidoglycans (PGN) of Gram-positive bacteria and thus provides bactericidal activity. Forms an equimolar complex with heat shock protein HSPA1A and induces programmed cell death through apoptosis and necroptosis in tumor cell lines by activating the TNFR1 receptor on the target cell membrane. In addition, acts in complex with the Ca(2+)-binding protein S100A4 as a chemoattractant able to induce lymphocyte movement. Mechanistically, this complex acts as a ligand of the chemotactic receptors CCR5 and CXCR3 which are present on the cells of the immune system. Promotes also the activation of lymphocytes that become able to kill virus-infected cells as well as tumor cells by modulating the spectrum of their target-cell specificity. Induction of cytotoxicity on monocyte surface requires interaction with TREM1 receptor. The sequence is that of Peptidoglycan recognition protein 1 (PGLYRP1) from Bos indicus (Zebu).